A 160-amino-acid polypeptide reads, in one-letter code: Transcription antitermination protein NusB (160 aa).

This sequence belongs to the NusB family.

Involved in transcription antitermination. Required for transcription of ribosomal RNA (rRNA) genes. Binds specifically to the boxA antiterminator sequence of the ribosomal RNA (rrn) operons. In Salinibacter ruber (strain DSM 13855 / M31), this protein is Transcription antitermination protein NusB.